The sequence spans 78 residues: uncharacterized protein (78 aa).

This is an uncharacterized protein from Bacillus subtilis (strain 168).